Reading from the N-terminus, the 512-residue chain is GMP synthase [glutamine-hydrolyzing] (512 aa).

A Glutamine amidotransferase type-1 domain is found at 7-197; that stretch reads TILILDFGGQ…LFEVCDCSAD (191 aa). Cys84 acts as the Nucleophile in catalysis. Active-site residues include His171 and Glu173. Residues 198–387 enclose the GMPS ATP-PPase domain; it reads WTMDSLIEQT…LGIPDEILYR (190 aa). ATP is bound at residue 225 to 231; that stretch reads SGGVDSA.

In terms of assembly, homodimer.

It carries out the reaction XMP + L-glutamine + ATP + H2O = GMP + L-glutamate + AMP + diphosphate + 2 H(+). It participates in purine metabolism; GMP biosynthesis; GMP from XMP (L-Gln route): step 1/1. Functionally, catalyzes the synthesis of GMP from XMP. This is GMP synthase [glutamine-hydrolyzing] from Caldanaerobacter subterraneus subsp. tengcongensis (strain DSM 15242 / JCM 11007 / NBRC 100824 / MB4) (Thermoanaerobacter tengcongensis).